The primary structure comprises 147 residues: Sec-independent protein translocase protein TatB (147 aa).

A helical membrane pass occupies residues 2–22; it reads FDGIGFMELLLIGVLGLVVLG. The tract at residues 68–147 is disordered; the sequence is ESKGLSNLSP…DTRSNPKANG (80 aa). Residues 71-97 are compositionally biased toward polar residues; sequence GLSNLSPELQESIDQLKQAAQSVNRPY. Residues 112-133 show a composition bias toward low complexity; that stretch reads PASQSVSSEASPTASSAPTSEP.

Belongs to the TatB family. As to quaternary structure, the Tat system comprises two distinct complexes: a TatABC complex, containing multiple copies of TatA, TatB and TatC subunits, and a separate TatA complex, containing only TatA subunits. Substrates initially bind to the TatABC complex, which probably triggers association of the separate TatA complex to form the active translocon.

It localises to the cell inner membrane. Its function is as follows. Part of the twin-arginine translocation (Tat) system that transports large folded proteins containing a characteristic twin-arginine motif in their signal peptide across membranes. Together with TatC, TatB is part of a receptor directly interacting with Tat signal peptides. TatB may form an oligomeric binding site that transiently accommodates folded Tat precursor proteins before their translocation. The sequence is that of Sec-independent protein translocase protein TatB from Shewanella sp. (strain MR-4).